The chain runs to 113 residues: uncharacterized protein (113 aa).

This is an uncharacterized protein from Listeria innocua serovar 6a (strain ATCC BAA-680 / CLIP 11262).